A 369-amino-acid chain; its full sequence is Protein VP6 (369 aa).

The disordered stretch occupies residues 20 to 208 (LEQRSIAPLL…EEAKVGGGDR (189 aa)). Positions 29–66 (LREKNSTEAKSKLKEDGEKKNKSEKEENKIHDDRRVES) are enriched in basic and acidic residues. 2 stretches are compositionally biased toward gly residues: residues 92–111 (TGGG…GGVG) and 162–171 (TSGGLQGRGG). The segment covering 196 to 208 (TEGEEAKVGGGDR) has biased composition (basic and acidic residues).

This sequence belongs to the orbivirus VP6 family.

The protein localises to the virion. The chain is Protein VP6 (S9) from African horse sickness virus 3 (AHSV-3).